Here is a 556-residue protein sequence, read N- to C-terminus: MKYIFVTGGVVSSLGKGVASASLGALLRARGYKVTAVKIDPYINIDAGTMRPYEHGEVFVTASGAETDLDIGNYERFLDLDIPAGSNITTGQVYQEVIRKERAGDYLSQTVQVIPHVTDEIKRRIRVAGETAGAEIVLIEVGGTVGDIESLPFLEAIRQFKFDEGDENVLFLHLTLVPYLGTSNEFKTKPTQHSVATLRSVGISPDIVMVRSKTKLPPEITRKIALFTSVRENRVFSSYDVGHVYEVPLALEEQGLGKVVEDLLGLERTMPNLGVWTNAVRTIKQPTREVTIAIAGKYTEMPDAYLSLMESLTHAGIANDARVNIRWVNAEELTESGEGGLATQLGNADGILVPGGFGIRGIEGKIKAAEYARTRGVPYLGICLGMQIAVIEYARHVAGLEGANSAEFDEYAPHKVIDLMPEQLEVGGKGGTMRLGDWPMDLRGGTTIAELYGVPQGGTVKERHRHRYEVNPAYTEQLQDAGLTISGVTPGVAGRGAGLVESVEIAGHPFFVALQAHPEFKSRPMRPSPPFAGFVKAALRGQSSDEQGTEATTASV.

The tract at residues 1 to 266 (MKYIFVTGGV…GKVVEDLLGL (266 aa)) is amidoligase domain. Serine 12 contacts CTP. Serine 12 lines the UTP pocket. Residue 13–18 (SLGKGV) participates in ATP binding. Residue tyrosine 53 coordinates L-glutamine. Aspartate 70 serves as a coordination point for ATP. Positions 70 and 140 each coordinate Mg(2+). CTP-binding positions include 147-149 (DIE), 187-192 (KTKPTQ), and lysine 223. UTP contacts are provided by residues 187 to 192 (KTKPTQ) and lysine 223. The Glutamine amidotransferase type-1 domain maps to 291-544 (TIAIAGKYTE…VKAALRGQSS (254 aa)). Position 356 (glycine 356) interacts with L-glutamine. The active-site Nucleophile; for glutamine hydrolysis is the cysteine 383. L-glutamine contacts are provided by residues 384–387 (LGMQ), glutamate 407, and arginine 467. Active-site residues include histidine 517 and glutamate 519.

This sequence belongs to the CTP synthase family. Homotetramer.

It carries out the reaction UTP + L-glutamine + ATP + H2O = CTP + L-glutamate + ADP + phosphate + 2 H(+). It catalyses the reaction L-glutamine + H2O = L-glutamate + NH4(+). The catalysed reaction is UTP + NH4(+) + ATP = CTP + ADP + phosphate + 2 H(+). Its pathway is pyrimidine metabolism; CTP biosynthesis via de novo pathway; CTP from UDP: step 2/2. Its activity is regulated as follows. Allosterically activated by GTP, when glutamine is the substrate; GTP has no effect on the reaction when ammonia is the substrate. The allosteric effector GTP functions by stabilizing the protein conformation that binds the tetrahedral intermediate(s) formed during glutamine hydrolysis. Inhibited by the product CTP, via allosteric rather than competitive inhibition. Catalyzes the ATP-dependent amination of UTP to CTP with either L-glutamine or ammonia as the source of nitrogen. Regulates intracellular CTP levels through interactions with the four ribonucleotide triphosphates. The protein is CTP synthase of Deinococcus deserti (strain DSM 17065 / CIP 109153 / LMG 22923 / VCD115).